The sequence spans 266 residues: MGSSKLLSLALLLVLLTHANSASETSFNFTSFDTNKLILQGDASVSSKGQLLLTKVRGNGDPTVDSMGRAFYYAPIQIRDSTTGKLASFDTNFTFSIRPYSNNENSAFGLAFALVPVDSEPKRKDYFLGLFNKPDDPEAHIVAVVFDTSSNQIEIDMNSISPVARESCHFHKYNGEKVEVRITYDSSKKNLRASLVYLREQSATSSTSSVHMEKVLNDWVSVGFSATSGLYDPTSETHDVLSWSFSSKFSQHTTSERSNFLLNMFL.

Positions 1–21 are cleaved as a signal peptide; it reads MGSSKLLSLALLLVLLTHANS. Residues Asn-28 and Asn-92 are each glycosylated (N-linked (GlcNAc...) asparagine).

Belongs to the leguminous lectin family.

Functionally, seed storage. This carbohydrate-binding lectin has toxic effects on the important bean bruchid pests, Z.subfasciatus and A.obtectus. This chain is Arcelin-4 (ARC4), found in Phaseolus vulgaris (Kidney bean).